We begin with the raw amino-acid sequence, 225 residues long: NAD(P)H-quinone oxidoreductase subunit K, chloroplastic (225 aa).

[4Fe-4S] cluster-binding residues include C43, C44, C108, and C139.

This sequence belongs to the complex I 20 kDa subunit family. NDH is composed of at least 16 different subunits, 5 of which are encoded in the nucleus. The cofactor is [4Fe-4S] cluster.

It localises to the plastid. It is found in the chloroplast thylakoid membrane. It catalyses the reaction a plastoquinone + NADH + (n+1) H(+)(in) = a plastoquinol + NAD(+) + n H(+)(out). It carries out the reaction a plastoquinone + NADPH + (n+1) H(+)(in) = a plastoquinol + NADP(+) + n H(+)(out). In terms of biological role, NDH shuttles electrons from NAD(P)H:plastoquinone, via FMN and iron-sulfur (Fe-S) centers, to quinones in the photosynthetic chain and possibly in a chloroplast respiratory chain. The immediate electron acceptor for the enzyme in this species is believed to be plastoquinone. Couples the redox reaction to proton translocation, and thus conserves the redox energy in a proton gradient. In Crucihimalaya wallichii (Rock-cress), this protein is NAD(P)H-quinone oxidoreductase subunit K, chloroplastic.